Reading from the N-terminus, the 348-residue chain is RNA 3'-terminal phosphate cyclase (348 aa).

ATP is bound by residues Gln-107 and His-290 to Gln-294. His-316 serves as the catalytic Tele-AMP-histidine intermediate.

It belongs to the RNA 3'-terminal cyclase family. Type 1 subfamily.

It is found in the cytoplasm. It carries out the reaction a 3'-end 3'-phospho-ribonucleotide-RNA + ATP = a 3'-end 2',3'-cyclophospho-ribonucleotide-RNA + AMP + diphosphate. Catalyzes the conversion of 3'-phosphate to a 2',3'-cyclic phosphodiester at the end of RNA. The mechanism of action of the enzyme occurs in 3 steps: (A) adenylation of the enzyme by ATP; (B) transfer of adenylate to an RNA-N3'P to produce RNA-N3'PP5'A; (C) and attack of the adjacent 2'-hydroxyl on the 3'-phosphorus in the diester linkage to produce the cyclic end product. The biological role of this enzyme is unknown but it is likely to function in some aspects of cellular RNA processing. The chain is RNA 3'-terminal phosphate cyclase (rtcA) from Nostoc sp. (strain PCC 7120 / SAG 25.82 / UTEX 2576).